The following is a 264-amino-acid chain: S-adenosylmethionine decarboxylase proenzyme (264 aa).

Ser-112 (schiff-base intermediate with substrate; via pyruvic acid) is an active-site residue. Ser-112 is modified (pyruvic acid (Ser); by autocatalysis). His-117 functions as the Proton acceptor; for processing activity in the catalytic mechanism. Cys-140 functions as the Proton donor; for catalytic activity in the catalytic mechanism.

It belongs to the prokaryotic AdoMetDC family. Type 2 subfamily. Heterooctamer of four alpha and four beta chains arranged as a tetramer of alpha/beta heterodimers. Pyruvate serves as cofactor. Is synthesized initially as an inactive proenzyme. Formation of the active enzyme involves a self-maturation process in which the active site pyruvoyl group is generated from an internal serine residue via an autocatalytic post-translational modification. Two non-identical subunits are generated from the proenzyme in this reaction, and the pyruvate is formed at the N-terminus of the alpha chain, which is derived from the carboxyl end of the proenzyme. The post-translation cleavage follows an unusual pathway, termed non-hydrolytic serinolysis, in which the side chain hydroxyl group of the serine supplies its oxygen atom to form the C-terminus of the beta chain, while the remainder of the serine residue undergoes an oxidative deamination to produce ammonia and the pyruvoyl group blocking the N-terminus of the alpha chain.

The enzyme catalyses S-adenosyl-L-methionine + H(+) = S-adenosyl 3-(methylsulfanyl)propylamine + CO2. It participates in amine and polyamine biosynthesis; S-adenosylmethioninamine biosynthesis; S-adenosylmethioninamine from S-adenosyl-L-methionine: step 1/1. Catalyzes the decarboxylation of S-adenosylmethionine to S-adenosylmethioninamine (dcAdoMet), the propylamine donor required for the synthesis of the polyamines spermine and spermidine from the diamine putrescine. The protein is S-adenosylmethionine decarboxylase proenzyme of Salmonella arizonae (strain ATCC BAA-731 / CDC346-86 / RSK2980).